The chain runs to 118 residues: Large ribosomal subunit protein bL20 (118 aa).

Belongs to the bacterial ribosomal protein bL20 family.

Functionally, binds directly to 23S ribosomal RNA and is necessary for the in vitro assembly process of the 50S ribosomal subunit. It is not involved in the protein synthesizing functions of that subunit. This is Large ribosomal subunit protein bL20 from Phenylobacterium zucineum (strain HLK1).